Consider the following 413-residue polypeptide: Tyrosine--tRNA ligase (413 aa).

Residues 59–68 (PTAPDIHLGH) carry the 'HIGH' region motif. The 'KMSKS' region motif lies at 243–247 (KMSKS). Position 246 (lysine 246) interacts with ATP. Residues 351 to 411 (LAIGQLLKQA…GKRRFARVTL (61 aa)) enclose the S4 RNA-binding domain.

This sequence belongs to the class-I aminoacyl-tRNA synthetase family. TyrS type 2 subfamily. In terms of assembly, homodimer.

It is found in the cytoplasm. The catalysed reaction is tRNA(Tyr) + L-tyrosine + ATP = L-tyrosyl-tRNA(Tyr) + AMP + diphosphate + H(+). In terms of biological role, catalyzes the attachment of tyrosine to tRNA(Tyr) in a two-step reaction: tyrosine is first activated by ATP to form Tyr-AMP and then transferred to the acceptor end of tRNA(Tyr). The polypeptide is Tyrosine--tRNA ligase (Burkholderia pseudomallei (strain K96243)).